A 400-amino-acid chain; its full sequence is MSKKSVAQLSAADLEGKRVLVRVDFNVPVDEKGVITDETRIRAALPTIQDLISKGAKVILVSHFGRPKGVDEKLRLTPVAQRLSELLHKPVAKLDDCIGDAVIAHTQAMANGDVCLLENVRFHPGEEKNDPEFAKQLAACAEVYVNDAFGTAHRAHASTAGVTQYLSPCVAGFLMEKELEYLQNAIEHPRRPLAAIVGGSKVSSKIGVIEALLEKVDKLLIGGGMIFTFYKARGLNVGKSLVEEDKLELAKHLETKAQEKGVELLLPTDVVVADNFANDANSQVVSIEAIPDDWMGLDIGPASVKRFQEALQDCKTVIWNGPMGVFEFDQFAKGTEAIARYLAELTSQGVCTIIGGGDSVAAVEKVGVADRMSHISTGGGASLELLEGKQLPGIAALDDA.

Substrate-binding positions include Asp24–Asn26, Arg40, His63–Arg66, Arg121, and Arg154. Residues Lys205, Gly296, Glu327, and Gly356 to Ser359 each bind ATP.

This sequence belongs to the phosphoglycerate kinase family. As to quaternary structure, monomer.

It localises to the cytoplasm. The catalysed reaction is (2R)-3-phosphoglycerate + ATP = (2R)-3-phospho-glyceroyl phosphate + ADP. The protein operates within carbohydrate degradation; glycolysis; pyruvate from D-glyceraldehyde 3-phosphate: step 2/5. The sequence is that of Phosphoglycerate kinase from Thermosynechococcus vestitus (strain NIES-2133 / IAM M-273 / BP-1).